Consider the following 215-residue polypeptide: LexA repressor (215 aa).

The segment at residues 28 to 48 (RAEIAAELGFSSPNAAEEHLR) is a DNA-binding region (H-T-H motif). Residues Ser133 and Lys170 each act as for autocatalytic cleavage activity in the active site.

The protein belongs to the peptidase S24 family. Homodimer.

It catalyses the reaction Hydrolysis of Ala-|-Gly bond in repressor LexA.. Represses a number of genes involved in the response to DNA damage (SOS response), including recA and lexA. In the presence of single-stranded DNA, RecA interacts with LexA causing an autocatalytic cleavage which disrupts the DNA-binding part of LexA, leading to derepression of the SOS regulon and eventually DNA repair. The sequence is that of LexA repressor from Burkholderia cenocepacia (strain ATCC BAA-245 / DSM 16553 / LMG 16656 / NCTC 13227 / J2315 / CF5610) (Burkholderia cepacia (strain J2315)).